Consider the following 483-residue polypeptide: MDNQTVAAIWSCASATCLSLDAKRHSVETNTNDRQAPPGLSNSNNNNNNNKSTAVDADPRKLRHIAHTPRGSCFMALLLLLLLALNFRHAHSCGPGRGLGRRRERNLYPLVLKQTVPNLSEYMSGASGPIEGVIQRDSPNFKDLVPNYNRDIIFRDEEGTGADRLMSKRCREKLNTLSYSVMNEWPGVRLLVTESWDEDHQHGQESLHYEGRAVTIATSDRDQSKYGMLARLAVEAGFDWVSYVSRRHIYCSVKSDSSPFISHVHGCFTPESTALLESGAKKPLSELAIGDRVLSMNGKGQAVYSEVILFMDRNLEQMQNFVQLHTDSGAVLTVTPAHLITVWQPEREALDFVFADRVEELNYVLVHDATGELRPHRVIRVSSVRSRGVVAPLTREGTIVVDSVAASCYAVISSQSLAHWGLAPMRLLYTLQSWMPAKGQLRTAQDKSTPKDATAQQQNGLHWYANALYKVKDYVLPQSWRHD.

The N-terminal stretch at 1–19 (MDNQTVAAIWSCASATCLS) is a signal peptide. Positions 20–92 (LDAKRHSVET…LALNFRHAHS (73 aa)) are excised as a propeptide. The disordered stretch occupies residues 28 to 57 (ETNTNDRQAPPGLSNSNNNNNNNKSTAVDA). The segment covering 41-50 (SNSNNNNNNN) has biased composition (low complexity). Cys-93 carries the N-palmitoyl cysteine lipid modification. Residues Glu-157, Glu-158, Asp-163, Thr-193, Glu-194, Asp-197, and Asp-199 each coordinate Ca(2+). Gly-266 is lipidated: Cholesterol glycine ester.

Belongs to the hedgehog family. Interacts with shf. In terms of processing, the C-terminal part of the hedgehog protein precursor displays an autoproteolysis activity that results in the cleavage of the full-length protein into two parts (N-product and C-product). In addition, the C-terminal part displays a cholesterol transferase activity that results by the covalent attachment of a cholesterol moiety to the C-terminal of the newly generated N-product. The N-product is the active species in both local and long-range signaling, whereas the C-product has no signaling activity. Post-translationally, cholesterylation is required for N-product targeting to lipid rafts and multimerization. N-palmitoylation by Rasp of the hedgehog N-product, within the secretory pathway, is required for the embryonic and larval patterning activities of the hedgehog signal.

The protein localises to the nucleus. It localises to the cytoplasm. It is found in the cell membrane. It carries out the reaction glycyl-L-cysteinyl-[protein] + cholesterol + H(+) = [protein]-C-terminal glycyl cholesterol ester + N-terminal L-cysteinyl-[protein]. In terms of biological role, the C-terminal part of the hedgehog protein precursor displays an autoproteolysis activity that results in the cleavage of the full-length protein into two parts (N-product and C-product). In addition, the C-terminal part displays a cholesterol transferase activity that results by the covalent attachment of a cholesterol moiety to the C-terminal of the newly generated N-product. Once cleaved, the C-product has no signaling activity and diffuses from the cell. Its function is as follows. The dually lipidated hedgehog protein N-product is a morphogen which is essential for a variety of patterning events during development. Establishes the anterior-posterior axis of the embryonic segments and patterns the larval imaginal disks. Binds to the patched (ptc) receptor, which functions in association with smoothened (smo), to activate the transcription of target genes wingless (wg), decapentaplegic (dpp) and ptc. In the absence of hh, ptc represses the constitutive signaling activity of smo through fused (fu). Essential component of a signaling pathway which regulates the Duox-dependent gut immune response to bacterial uracil; required to activate Cad99C-dependent endosome formation, norpA-dependent Ca2+ mobilization and p38 MAPK, which are essential steps in the Duox-dependent production of reactive oxygen species (ROS) in response to intestinal bacterial infection. During photoreceptor differentiation, it up-regulates transcription of Ubr3, which in turn promotes the hh-signaling pathway by mediating the ubiquitination and degradation of cos. This Drosophila virilis (Fruit fly) protein is Protein hedgehog.